The sequence spans 210 residues: Insulin receptor (210 aa).

Residues 1–96 enclose the Fibronectin type-III domain; it reads VSNSSSQIIL…SQILKELEES (96 aa). Residues asparagine 3, asparagine 21, and asparagine 68 are each glycosylated (N-linked (GlcNAc...) asparagine). The disordered stretch occupies residues 55-78; the sequence is WSPPFESEDSQKHNQSEYEDSAGE. The segment at 103–111 is insulin-binding; sequence EDYLHNVVF. The segment at 116–169 is disordered; sequence TSSGTGAEDPRPSRKRRSLGDVGNVTVAVPTVAAFPNTSSTSTPTSPEEHRPFE. Topologically, residues 133–210 are extracellular; it reads SLGDVGNVTV…EERCSVAAYV (78 aa). The span at 137–161 shows a compositional bias: low complexity; the sequence is VGNVTVAVPTVAAFPNTSSTSTPTS. Residues asparagine 139 and asparagine 152 are each glycosylated (N-linked (GlcNAc...) asparagine). Cysteine 195 and cysteine 204 form a disulfide bridge.

Belongs to the protein kinase superfamily. Tyr protein kinase family. Insulin receptor subfamily. As to quaternary structure, tetramer of 2 alpha and 2 beta chains linked by disulfide bonds. The alpha chains carry the insulin-binding regions, while the beta chains carry the kinase domain. Forms a hybrid receptor with IGF1R, the hybrid is a tetramer consisting of 1 alpha chain and 1 beta chain of INSR and 1 alpha chain and 1 beta chain of IGF1R. Interacts with SORBS1 but dissociates from it following insulin stimulation. Binds SH2B2. Activated form of INSR interacts (via phosphorylated Tyrosine) with the PTB/PID domains of IRS1 and SHC1. The sequences surrounding the phosphorylated NPXY motif contribute differentially to either IRS1 or SHC1 recognition. Interacts (via tyrosines in the C-terminus) with IRS2 (via PTB domain and 591-786 AA); the 591-786 would be the primary anchor of IRS2 to INSR while the PTB domain would have a stabilizing action on the interaction with INSR. Interacts with the SH2 domains of the 85 kDa regulatory subunit of PI3K (PIK3R1) in vitro, when autophosphorylated on tyrosine residues. Interacts with SOCS7. Interacts with SOCS3. Interacts with SOCS1. Interacts with CAV2 (tyrosine-phosphorylated form); the interaction is increased with 'Tyr-27'phosphorylation of CAV2. Interacts with ARRB2. Interacts with GRB10; this interaction blocks the association between IRS1/IRS2 and INSR, significantly reduces insulin-stimulated tyrosine phosphorylation of IRS1 and IRS2 and thus decreases insulin signaling. Interacts with GRB7. Interacts with PDPK1. Interacts with GRB14 (via BPS domain). Interacts (via subunit alpha) with ENPP1 (via 485-599 AA); this interaction blocks autophosphorylation. Interacts with PTPRE. Interacts with STAT5B (via SH2 domain). Interacts with PTPRF. Interacts with ATIC; ATIC together with PRKAA2/AMPK2 and HACD3/PTPLAD1 is proposed to be part of a signaling netwok regulating INSR autophosphorylation and endocytosis. Interacts with the insulin receptor SORL1; this interaction strongly increases its surface exposure, hence strengthens insulin signal reception. Interacts (tyrosine phosphorylated) with CCDC88A/GIV (via SH2-like region); binding requires autophosphorylation of the INSR C-terminal region. Interacts with GNAI3; the interaction is probably mediated by CCDC88A/GIV. Interacts with LMBRD1. Interacts (in response to insulin stimulation) with NCK1; this interaction may recruit PTPN1 to mediate INSR dephosphorylation. After being transported from the endoplasmic reticulum to the Golgi apparatus, the single glycosylated precursor is further glycosylated and then cleaved, followed by its transport to the plasma membrane. Post-translationally, autophosphorylated on tyrosine residues in response to insulin. Dephosphorylated by PTPN1, PTPRE and PTPRF. Dephosphorylated by PTPN2; down-regulates insulin-induced signaling. In terms of processing, S-nitrosylation by BLVRB inhibits the receptor tyrosine kinase, thereby inhibiting insulin signaling.

It localises to the cell membrane. Its subcellular location is the late endosome. The protein localises to the lysosome. The catalysed reaction is L-tyrosyl-[protein] + ATP = O-phospho-L-tyrosyl-[protein] + ADP + H(+). Its activity is regulated as follows. Activated in response to insulin. Autophosphorylation activates the kinase activity. PTPN1, PTPRE and PTPRF dephosphorylate important tyrosine residues, thereby reducing INSR activity. Inhibited by ENPP1. GRB10 and GRB14 inhibit the catalytic activity of the INSR, they block access of substrates to the activated receptor. SOCS1 and SOCS3 act as negative regulators of INSR activity, they bind to the activated INRS and interfere with the phosphorylation of INSR substrates. Functionally, receptor tyrosine kinase which mediates the pleiotropic actions of insulin. Binding of insulin leads to phosphorylation of several intracellular substrates, including, insulin receptor substrates (IRS1, 2, 3, 4), SHC, GAB1, CBL and other signaling intermediates. Each of these phosphorylated proteins serve as docking proteins for other signaling proteins that contain Src-homology-2 domains (SH2 domain) that specifically recognize different phosphotyrosine residues, including the p85 regulatory subunit of PI3K and SHP2. Phosphorylation of IRSs proteins lead to the activation of two main signaling pathways: the PI3K-AKT/PKB pathway, which is responsible for most of the metabolic actions of insulin, and the Ras-MAPK pathway, which regulates expression of some genes and cooperates with the PI3K pathway to control cell growth and differentiation. Binding of the SH2 domains of PI3K to phosphotyrosines on IRS1 leads to the activation of PI3K and the generation of phosphatidylinositol-(3, 4, 5)-triphosphate (PIP3), a lipid second messenger, which activates several PIP3-dependent serine/threonine kinases, such as PDPK1 and subsequently AKT/PKB. The net effect of this pathway is to produce a translocation of the glucose transporter SLC2A4/GLUT4 from cytoplasmic vesicles to the cell membrane to facilitate glucose transport. Moreover, upon insulin stimulation, activated AKT/PKB is responsible for: anti-apoptotic effect of insulin by inducing phosphorylation of BAD; regulates the expression of gluconeogenic and lipogenic enzymes by controlling the activity of the winged helix or forkhead (FOX) class of transcription factors. Another pathway regulated by PI3K-AKT/PKB activation is mTORC1 signaling pathway which regulates cell growth and metabolism and integrates signals from insulin. AKT mediates insulin-stimulated protein synthesis by phosphorylating TSC2 thereby activating mTORC1 pathway. The Ras/RAF/MAP2K/MAPK pathway is mainly involved in mediating cell growth, survival and cellular differentiation of insulin. Phosphorylated IRS1 recruits GRB2/SOS complex, which triggers the activation of the Ras/RAF/MAP2K/MAPK pathway. In addition to binding insulin, the insulin receptor can bind insulin-like growth factors (IGFI and IGFII). When present in a hybrid receptor with IGF1R, binds IGF1. In adipocytes, inhibits lipolysis. This Macaca mulatta (Rhesus macaque) protein is Insulin receptor (INSR).